The primary structure comprises 714 residues: FERM domain-containing protein 7 (714 aa).

Residues 2–282 form the FERM domain; sequence LHLKVQFLDD…EYHAFFRLSE (281 aa). A coiled-coil region spans residues 537–558; sequence NIRMKSFQQDLQVLQEAIARTS.

In terms of tissue distribution, expressed in liver, kidney, pancreas and at low levels in brain and heart. Expressed in embryonic brain and developing neural retina.

The protein localises to the cell projection. The protein resides in the neuron projection. It is found in the growth cone. In terms of biological role, plays a role in neurite development, may be through the activation of the GTPase RAC1. Plays a role in the control of eye movement and gaze stability. The chain is FERM domain-containing protein 7 (FRMD7) from Homo sapiens (Human).